A 115-amino-acid chain; its full sequence is Tyrosine-protein phosphatase 23 (115 aa).

The 115-residue stretch at 1-115 folds into the Tyrosine-protein phosphatase domain; the sequence is WMMIVEQKCR…EIGGDAPMVV (115 aa). Aspartate 83 contributes to the substrate binding site.

Belongs to the protein-tyrosine phosphatase family.

It carries out the reaction O-phospho-L-tyrosyl-[protein] + H2O = L-tyrosyl-[protein] + phosphate. The protein is Tyrosine-protein phosphatase 23 (STY-23) of Styela plicata (Wrinkled sea squirt).